Consider the following 579-residue polypeptide: Pre-mRNA-processing factor 17 (579 aa).

Positions 1–19 are enriched in low complexity; sequence MSAAIAALAASYGSGSGSE. Disordered stretches follow at residues 1-47 and 204-237; these read MSAA…PSSK and DVAK…PGEE. At S46 the chain carries Phosphoserine. 7 WD repeats span residues 286–326, 330–369, 371–413, 416–455, 459–498, 504–545, and 548–578; these read GHTK…RCLR, GHSK…CISR, TNRK…IVQE, RHLG…DFKY, PSMH…RLNK, GHMV…LYSR, and AHDK…IKLW.

In terms of assembly, component of the pre-catalytic and catalytic spliceosome complexes. Component of the postcatalytic spliceosome P complex. Interacts with PPIL1; this interaction leads to CDC40 isomerization. Post-translationally, undergoes isomerization of the peptide bond between Gly-94 and Pro-95. The reaction is catalyzed by PPIL1.

The protein resides in the nucleus. Its subcellular location is the nucleus speckle. Functionally, required for pre-mRNA splicing as component of the activated spliceosome. Plays an important role in embryonic brain development; this function does not require proline isomerization. The polypeptide is Pre-mRNA-processing factor 17 (CDC40) (Homo sapiens (Human)).